Consider the following 420-residue polypeptide: Adenylosuccinate synthetase (420 aa).

Residues 11–17 and 39–41 each bind GTP; these read GDEGKGK and GHT. Aspartate 12 functions as the Proton acceptor in the catalytic mechanism. Residues aspartate 12 and glycine 39 each coordinate Mg(2+). Residues 12–15, 37–40, threonine 129, arginine 143, asparagine 218, threonine 233, and arginine 297 contribute to the IMP site; these read DEGK and NAGH. Residue histidine 40 is the Proton donor of the active site. 293–299 serves as a coordination point for substrate; it reads VTTGRKR. Residues arginine 299, 325–327, and 407–409 contribute to the GTP site; these read KLD and GTG.

The protein belongs to the adenylosuccinate synthetase family. As to quaternary structure, homodimer. The cofactor is Mg(2+).

It is found in the cytoplasm. The enzyme catalyses IMP + L-aspartate + GTP = N(6)-(1,2-dicarboxyethyl)-AMP + GDP + phosphate + 2 H(+). It participates in purine metabolism; AMP biosynthesis via de novo pathway; AMP from IMP: step 1/2. Functionally, plays an important role in the de novo pathway and in the salvage pathway of purine nucleotide biosynthesis. Catalyzes the first committed step in the biosynthesis of AMP from IMP. The polypeptide is Adenylosuccinate synthetase (Uncinocarpus reesii (strain UAMH 1704)).